Consider the following 173-residue polypeptide: Alpha-crystallin A chain (173 aa).

Met1 carries the N-acetylmethionine modification. The tract at residues Met1–Glu63 is required for complex formation with BFSP1 and BFSP2. Gln6 is subject to Deamidated glutamine; partial. Ser45 is modified (phosphoserine). Position 50 is a deamidated glutamine; partial (Gln50). The sHSP domain maps to Leu52–Ser162. An N6-acetyllysine modification is found at Lys70. Residue Gln90 is modified to Deamidated glutamine; partial. An N6-acetyllysine modification is found at Lys99. His100 serves as a coordination point for Zn(2+). Residue Asn101 is modified to Deamidated asparagine; partial. Residues Glu102 and His107 each coordinate Zn(2+). Ser122 carries the post-translational modification Phosphoserine. The residue at position 123 (Asn123) is a Deamidated asparagine; partial. Residues Pro144 to Ser173 form a disordered region. The span at Gly153–Pro167 shows a compositional bias: basic and acidic residues. Zn(2+) is bound at residue His154. Ser162 carries an O-linked (GlcNAc) serine glycan.

The protein belongs to the small heat shock protein (HSP20) family. As to quaternary structure, heteromer composed of three CRYAA and one CRYAB subunits. Inter-subunit bridging via zinc ions enhances stability, which is crucial as there is no protein turn over in the lens. Can also form homodimers and homotetramers (dimers of dimers) which serve as the building blocks of homooligomers. Within homooligomers, the zinc-binding motif is created from residues of 3 different molecules. His-100 and Glu-102 from one molecule are ligands of the zinc ion, and His-107 and His-154 residues from additional molecules complete the site with tetrahedral coordination geometry. Part of a complex required for lens intermediate filament formation composed of BFSP1, BFSP2 and CRYAA. Post-translationally, acetylation at Lys-70 may increase chaperone activity. In terms of processing, undergoes age-dependent proteolytical cleavage at the C-terminus.

It is found in the cytoplasm. It localises to the nucleus. In terms of biological role, contributes to the transparency and refractive index of the lens. Acts as a chaperone, preventing aggregation of various proteins under a wide range of stress conditions. Required for the correct formation of lens intermediate filaments as part of a complex composed of BFSP1, BFSP2 and CRYAA. The polypeptide is Alpha-crystallin A chain (CRYAA) (Ovis aries (Sheep)).